The sequence spans 559 residues: Formate--tetrahydrofolate ligase (559 aa).

66-73 (TPPGEGKT) contacts ATP.

The protein belongs to the formate--tetrahydrofolate ligase family.

It catalyses the reaction (6S)-5,6,7,8-tetrahydrofolate + formate + ATP = (6R)-10-formyltetrahydrofolate + ADP + phosphate. It participates in one-carbon metabolism; tetrahydrofolate interconversion. The chain is Formate--tetrahydrofolate ligase from Nocardioides sp. (strain ATCC BAA-499 / JS614).